We begin with the raw amino-acid sequence, 457 residues long: PE-PGRS family protein PE_PGRS18 (457 aa).

The PE domain occupies 1–92; sequence MSFVNVAPQL…SSTYAVAEAA (92 aa). 4 NHL repeats span residues 291 to 321, 333 to 363, 379 to 404, and 419 to 447; these read FNDPHGVAVNPGGNIYVTNQGSNTVSVIDPV, NGPSGVAVSPVTGLVFVTNFDSNTVSVIDPN, GVAVNPGGNIYVTNQFSNTVSVIDPA, and PTGVAVNPVTGVVYVTNSLDDTVSVITGE.

This sequence belongs to the mycobacterial PE family. PGRS subfamily.

Its subcellular location is the secreted. It is found in the cell wall. Its function is as follows. Enhances mycobacterial intracellular survival, probably via altering host macrophage cytokine profiling and attenuating the cell apoptosis. Could be required for host endothelial-cell invasion. In terms of biological role, expression in Mycobacterium smegmatis, a nonpathogenic species naturally deficient in PE_PGRS genes, results in alteration of the production of host cytokines, including IL-6, IL-1beta, IL-10 and IL-12p40, as well as enhanced survival within macrophages largely via attenuating the apoptosis of macrophages. This is PE-PGRS family protein PE_PGRS18 from Mycobacterium tuberculosis (strain ATCC 25618 / H37Rv).